Here is a 419-residue protein sequence, read N- to C-terminus: MYEPTLTVESFDSELAGAIRDERRRQEHHVELIASENYVSPRVLELQGSVLTNKYAEGYPGRRYYGGCEFVDIAEQLAIDRAKELFVADYANVQPHSGSQANAEAYMALMNPGDTLLAMDLSHGGHLTHGSPVSFSGKFYKAVHYGLNAHGDIDYEQAAQLAQEHKPKVILAGFSAFSGIVDWQRFREIADSVNAYFMTDIAHVAGLVAAGVYPSPVQIADVTTTTTHKTLRGPRAGLILAKANPELEKRLNSAVFPGSQGGPLMHIIAAKAVAFKEAMQPEFKTYAQQILKNAKAMAEVMKERGYTIVSGGTQNHLFLVSLLDKNISGKEAEAALGRANITVNKNTVPGETRSPFVTSGLRIGTPAITTRGFKEKEASQLAHWVCDILDDIHNEKVIADVKQKAHELCGKFPVYQELD.

Residues L121 and 125–127 (GHL) each bind (6S)-5,6,7,8-tetrahydrofolate. N6-(pyridoxal phosphate)lysine is present on K229. 354-356 (SPF) contributes to the (6S)-5,6,7,8-tetrahydrofolate binding site.

The protein belongs to the SHMT family. Homodimer. Requires pyridoxal 5'-phosphate as cofactor.

It localises to the cytoplasm. It carries out the reaction (6R)-5,10-methylene-5,6,7,8-tetrahydrofolate + glycine + H2O = (6S)-5,6,7,8-tetrahydrofolate + L-serine. It participates in one-carbon metabolism; tetrahydrofolate interconversion. The protein operates within amino-acid biosynthesis; glycine biosynthesis; glycine from L-serine: step 1/1. In terms of biological role, catalyzes the reversible interconversion of serine and glycine with tetrahydrofolate (THF) serving as the one-carbon carrier. This reaction serves as the major source of one-carbon groups required for the biosynthesis of purines, thymidylate, methionine, and other important biomolecules. Also exhibits THF-independent aldolase activity toward beta-hydroxyamino acids, producing glycine and aldehydes, via a retro-aldol mechanism. In Coxiella burnetii (strain RSA 331 / Henzerling II), this protein is Serine hydroxymethyltransferase.